Here is a 373-residue protein sequence, read N- to C-terminus: UDP-N-acetylglucosamine--N-acetylmuramyl-(pentapeptide) pyrophosphoryl-undecaprenol N-acetylglucosamine transferase (373 aa).

UDP-N-acetyl-alpha-D-glucosamine-binding positions include 14–16 (TAG), asparagine 128, arginine 165, serine 199, and glutamine 295.

This sequence belongs to the glycosyltransferase 28 family. MurG subfamily.

Its subcellular location is the cell membrane. The catalysed reaction is di-trans,octa-cis-undecaprenyl diphospho-N-acetyl-alpha-D-muramoyl-L-alanyl-D-glutamyl-meso-2,6-diaminopimeloyl-D-alanyl-D-alanine + UDP-N-acetyl-alpha-D-glucosamine = di-trans,octa-cis-undecaprenyl diphospho-[N-acetyl-alpha-D-glucosaminyl-(1-&gt;4)]-N-acetyl-alpha-D-muramoyl-L-alanyl-D-glutamyl-meso-2,6-diaminopimeloyl-D-alanyl-D-alanine + UDP + H(+). It participates in cell wall biogenesis; peptidoglycan biosynthesis. Its function is as follows. Cell wall formation. Catalyzes the transfer of a GlcNAc subunit on undecaprenyl-pyrophosphoryl-MurNAc-pentapeptide (lipid intermediate I) to form undecaprenyl-pyrophosphoryl-MurNAc-(pentapeptide)GlcNAc (lipid intermediate II). The polypeptide is UDP-N-acetylglucosamine--N-acetylmuramyl-(pentapeptide) pyrophosphoryl-undecaprenol N-acetylglucosamine transferase (Mycobacterium sp. (strain JLS)).